The following is a 580-amino-acid chain: Glypican-3 (580 aa).

The first 24 residues, 1–24 (MAGTVRTACLVVAMLLSLDFPGQA), serve as a signal peptide directing secretion. At Gln25 the chain carries Pyrrolidone carboxylic acid. 7 disulfide bridges follow: Cys35-Cys72, Cys65-Cys262, Cys73-Cys265, Cys197-Cys349, Cys252-Cys285, Cys274-Cys422, and Cys278-Cys410. N-linked (GlcNAc...) asparagine glycosylation is found at Asn124 and Asn241. Ser352 carries the phosphoserine modification. N-linked (GlcNAc...) asparagine glycosylation is present at Asn418. Residues Ser495 and Ser509 are each glycosylated (O-linked (Xyl...) (glycosaminoglycan) serine). Asn554 carries the GPI-anchor amidated asparagine lipid modification. A propeptide spans 555 to 580 (LGNVHSPLKLLTSMAISVVCFFFLVH) (removed in mature form).

It belongs to the glypican family. As to quaternary structure, heterodimer; disulfide-linked. Cleavage by a furin-like convertase results in production of alpha and beta chains which form a disulfide-linked heterodimer. Interacts with DPP4. Interacts with FGF2. Interacts with WNT5A. Also interacts with WNT3A and WNT7B. Interacts with hedgehog protein SHH; the heparan sulfate chains are not required for the interaction. Also interacts with hedgehog protein IHH. Interacts with CD81. Interacts with Wnt receptors FZD4, FZD7 and FZD8; the heparan sulfate chains are required for the interaction. In terms of processing, O-glycosylated; contains heparan sulfate and/or chondroitin sulfate. Cleaved intracellularly by a furin-like convertase to generate 2 subunits, alpha and beta, which remain associated through disulfide bonds and are associated with the cell surface via the GPI-anchor. This processing is essential for its role in inhibition of hedgehog signaling. A second proteolytic event may result in cleavage of the protein on the cell surface, separating it from the GPI-anchor and leading to its shedding from the cell surface.

Its subcellular location is the cell membrane. Functionally, cell surface proteoglycan. Negatively regulates the hedgehog signaling pathway when attached via the GPI-anchor to the cell surface by competing with the hedgehog receptor PTC1 for binding to hedgehog proteins. Binding to the hedgehog protein SHH triggers internalization of the complex by endocytosis and its subsequent lysosomal degradation. Positively regulates the canonical Wnt signaling pathway by binding to the Wnt receptor Frizzled and stimulating the binding of the Frizzled receptor to Wnt ligands. Positively regulates the non-canonical Wnt signaling pathway. Binds to CD81 which decreases the availability of free CD81 for binding to the transcriptional repressor HHEX, resulting in nuclear translocation of HHEX and transcriptional repression. Inhibits the dipeptidyl peptidase activity of DPP4. Plays a role in limb patterning and skeletal development by controlling the cellular response to BMP4. Modulates the effects of growth factors BMP2, BMP7 and FGF7 on renal branching morphogenesis. Required for coronary vascular development. Plays a role in regulating cell movements during gastrulation. In Pan troglodytes (Chimpanzee), this protein is Glypican-3 (GPC3).